Here is a 106-residue protein sequence, read N- to C-terminus: Replication protein A 14 kDa subunit B (106 aa).

Met-1 bears the N-acetylmethionine mark.

Belongs to the replication factor A protein 3 family. As to quaternary structure, component of the heterotrimeric canonical replication protein A complex (RPA).

The protein localises to the nucleus. As part of the replication protein A (RPA/RP-A), a single-stranded DNA-binding heterotrimeric complex, may play an essential role in DNA replication, recombination and repair. Binds and stabilizes single-stranded DNA intermediates, preventing complementary DNA reannealing and recruiting different proteins involved in DNA metabolism. The sequence is that of Replication protein A 14 kDa subunit B (RPA3B) from Arabidopsis thaliana (Mouse-ear cress).